A 339-amino-acid chain; its full sequence is F420-dependent glucose-6-phosphate dehydrogenase (339 aa).

Coenzyme F420-(gamma-Glu)n is bound at residue Asp41. His42 (proton donor) is an active-site residue. Residues Thr78 and 109 to 110 (TG) contribute to the coenzyme F420-(gamma-Glu)n site. The Proton acceptor role is filled by Glu111. Residues Asn114, 177 to 178 (SG), and 180 to 181 (AA) each bind coenzyme F420-(gamma-Glu)n. The substrate site is built by Thr195, Lys198, Lys259, and Arg283.

Belongs to the F420-dependent glucose-6-phosphate dehydrogenase family. Homodimer.

The enzyme catalyses oxidized coenzyme F420-(gamma-L-Glu)(n) + D-glucose 6-phosphate + H(+) = 6-phospho-D-glucono-1,5-lactone + reduced coenzyme F420-(gamma-L-Glu)(n). Functionally, catalyzes the coenzyme F420-dependent oxidation of glucose 6-phosphate (G6P) to 6-phosphogluconolactone. This Nakamurella multipartita (strain ATCC 700099 / DSM 44233 / CIP 104796 / JCM 9543 / NBRC 105858 / Y-104) (Microsphaera multipartita) protein is F420-dependent glucose-6-phosphate dehydrogenase.